We begin with the raw amino-acid sequence, 123 residues long: Large ribosomal subunit protein bL12 (123 aa).

The protein belongs to the bacterial ribosomal protein bL12 family. Homodimer. Part of the ribosomal stalk of the 50S ribosomal subunit. Forms a multimeric L10(L12)X complex, where L10 forms an elongated spine to which 2 to 4 L12 dimers bind in a sequential fashion. Binds GTP-bound translation factors.

Its function is as follows. Forms part of the ribosomal stalk which helps the ribosome interact with GTP-bound translation factors. Is thus essential for accurate translation. The sequence is that of Large ribosomal subunit protein bL12 from Rhodopseudomonas palustris (strain BisA53).